We begin with the raw amino-acid sequence, 529 residues long: Cytochrome P450 monooxygenase fsoB (529 aa).

Residues 4–24 traverse the membrane as a helical segment; that stretch reads WLLSLLIAGVVFAIFQLRTVG. Cysteine 436 lines the heme pocket.

The protein belongs to the cytochrome P450 family. Heme serves as cofactor.

The protein resides in the membrane. In terms of biological role, cytochrome P450 monooxygenase; part of the gene cluster that mediates the biosynthesis of the enfumafungin-type antibiotic fuscoatroside. Four enzymes are sufficient to produce fuscoatroside: the terpene cyclase-glycosyl transferase fusion protein fsoAthe cytochrome P450 monoxygenases fsoD and fsoE, and the acetyltransferase fsoF; the cytochrome P450 monooxygenase fsoB and the glucose oxidase-like protein fsoC do not seem to play a role in biosynthesis of fuscoatroside. The chain is Cytochrome P450 monooxygenase fsoB from Humicola fuscoatra.